Consider the following 343-residue polypeptide: Succinylglutamate desuccinylase (343 aa).

Zn(2+) contacts are provided by H60, E63, and H157. E221 is a catalytic residue.

It belongs to the AspA/AstE family. Succinylglutamate desuccinylase subfamily. It depends on Zn(2+) as a cofactor.

It catalyses the reaction N-succinyl-L-glutamate + H2O = L-glutamate + succinate. Its pathway is amino-acid degradation; L-arginine degradation via AST pathway; L-glutamate and succinate from L-arginine: step 5/5. Transforms N(2)-succinylglutamate into succinate and glutamate. In Idiomarina loihiensis (strain ATCC BAA-735 / DSM 15497 / L2-TR), this protein is Succinylglutamate desuccinylase.